The following is a 320-amino-acid chain: Ferrochelatase (320 aa).

Positions 194 and 275 each coordinate Fe cation.

The protein belongs to the ferrochelatase family.

It localises to the cytoplasm. The catalysed reaction is heme b + 2 H(+) = protoporphyrin IX + Fe(2+). It functions in the pathway porphyrin-containing compound metabolism; protoheme biosynthesis; protoheme from protoporphyrin-IX: step 1/1. In terms of biological role, catalyzes the ferrous insertion into protoporphyrin IX. This Xylella fastidiosa (strain M23) protein is Ferrochelatase.